We begin with the raw amino-acid sequence, 239 residues long: Small ribosomal subunit protein uS3 (239 aa).

In terms of domain architecture, KH type-2 spans 39-107 (VRQVLRKKMS…PVHINVIEVR (69 aa)). The disordered stretch occupies residues 214-239 (SQEKQDDGSRGDRNADRSSRRSREVR). Positions 216–239 (EKQDDGSRGDRNADRSSRRSREVR) are enriched in basic and acidic residues.

It belongs to the universal ribosomal protein uS3 family. As to quaternary structure, part of the 30S ribosomal subunit. Forms a tight complex with proteins S10 and S14.

Functionally, binds the lower part of the 30S subunit head. Binds mRNA in the 70S ribosome, positioning it for translation. The protein is Small ribosomal subunit protein uS3 of Xylella fastidiosa (strain M23).